The primary structure comprises 457 residues: Serine--tRNA ligase (457 aa).

Position 252 to 254 (252 to 254) interacts with L-serine; sequence TAE. ATP is bound by residues 283–285 and V299; that span reads RKE. E306 is an L-serine binding site. ATP is bound at residue 370–373; sequence EMVS. An L-serine-binding site is contributed by T406.

Belongs to the class-II aminoacyl-tRNA synthetase family. Type-1 seryl-tRNA synthetase subfamily. Homodimer. The tRNA molecule binds across the dimer.

The protein localises to the cytoplasm. The catalysed reaction is tRNA(Ser) + L-serine + ATP = L-seryl-tRNA(Ser) + AMP + diphosphate + H(+). It carries out the reaction tRNA(Sec) + L-serine + ATP = L-seryl-tRNA(Sec) + AMP + diphosphate + H(+). The protein operates within aminoacyl-tRNA biosynthesis; selenocysteinyl-tRNA(Sec) biosynthesis; L-seryl-tRNA(Sec) from L-serine and tRNA(Sec): step 1/1. Its function is as follows. Catalyzes the attachment of serine to tRNA(Ser). Is also able to aminoacylate tRNA(Sec) with serine, to form the misacylated tRNA L-seryl-tRNA(Sec), which will be further converted into selenocysteinyl-tRNA(Sec). The polypeptide is Serine--tRNA ligase (Saccharolobus solfataricus (strain ATCC 35092 / DSM 1617 / JCM 11322 / P2) (Sulfolobus solfataricus)).